The chain runs to 201 residues: Adenylyl-sulfate kinase (201 aa).

35 to 42 contributes to the ATP binding site; sequence GLSGSGKS. Catalysis depends on S109, which acts as the Phosphoserine intermediate.

Belongs to the APS kinase family.

It carries out the reaction adenosine 5'-phosphosulfate + ATP = 3'-phosphoadenylyl sulfate + ADP + H(+). It functions in the pathway sulfur metabolism; hydrogen sulfide biosynthesis; sulfite from sulfate: step 2/3. Its function is as follows. Catalyzes the synthesis of activated sulfate. This is Adenylyl-sulfate kinase from Escherichia coli O139:H28 (strain E24377A / ETEC).